A 503-amino-acid chain; its full sequence is Probable cytosol aminopeptidase (503 aa).

Residues Lys-274 and Asp-279 each coordinate Mn(2+). Lys-286 is an active-site residue. Residues Asp-297, Asp-356, and Glu-358 each contribute to the Mn(2+) site. Arg-360 is a catalytic residue.

This sequence belongs to the peptidase M17 family. Mn(2+) is required as a cofactor.

Its subcellular location is the cytoplasm. It catalyses the reaction Release of an N-terminal amino acid, Xaa-|-Yaa-, in which Xaa is preferably Leu, but may be other amino acids including Pro although not Arg or Lys, and Yaa may be Pro. Amino acid amides and methyl esters are also readily hydrolyzed, but rates on arylamides are exceedingly low.. The catalysed reaction is Release of an N-terminal amino acid, preferentially leucine, but not glutamic or aspartic acids.. Functionally, presumably involved in the processing and regular turnover of intracellular proteins. Catalyzes the removal of unsubstituted N-terminal amino acids from various peptides. This is Probable cytosol aminopeptidase from Burkholderia pseudomallei (strain 1106a).